The chain runs to 371 residues: MSGTRAYNILVLPGDGIGPEVMAEAIKVLRTFNSSSMQFHLQEELIGGISIDTHGHSVTQPVKDAAVAADAVLFAAVGGSKVDHIRRGLDGPEGGLLQVRKAMDIYANLRPCSVDVPSREIARDFSPFRQEVIEGVDFVVVRENCGGAYFGKKVEEENYAMDEWGYSTTEIQRIARLAAELALRHDPPWPVISLDKANVLASSRLWRRVVENTISVEYPQVKLVHQLADSASLIMATDPRVLNGVILADNTFGDMLSDQAGSLIGTLGVLPSASLDGLPHPGKQEKVRGLYEPTHGSAPTIAGKNIANPTAMILCVSLMFRYSFNMENEARQIEDAVRAVLDRGLRTPDLGGNSSTQEFGDAVVAALQGKY.

79-93 (GSKVDHIRRGLDGPE) provides a ligand contact to NAD(+). Residues Arg-100, Arg-110, Arg-142, and Asp-229 each contribute to the substrate site. The Mg(2+) site is built by Asp-229, Asp-254, and Asp-258. An NAD(+)-binding site is contributed by 296–308 (GSAPTIAGKNIAN).

Belongs to the isocitrate and isopropylmalate dehydrogenases family. As to quaternary structure, homodimer. The cofactor is Mg(2+). It depends on Mn(2+) as a cofactor.

The protein localises to the cytoplasm. The catalysed reaction is (2R,3S)-3-isopropylmalate + NAD(+) = 4-methyl-2-oxopentanoate + CO2 + NADH. The protein operates within amino-acid biosynthesis; L-leucine biosynthesis; L-leucine from 3-methyl-2-oxobutanoate: step 3/4. Its function is as follows. Catalyzes the oxidation of 3-carboxy-2-hydroxy-4-methylpentanoate (3-isopropylmalate) to 3-carboxy-4-methyl-2-oxopentanoate. The product decarboxylates to 4-methyl-2 oxopentanoate. This chain is 3-isopropylmalate dehydrogenase B (leu2B), found in Aspergillus niger.